We begin with the raw amino-acid sequence, 418 residues long: Tol-Pal system protein TolB (418 aa).

Residues 1 to 21 (MKLFVQLVLFISLFIPYSTKA) form the signal peptide.

It belongs to the TolB family. As to quaternary structure, the Tol-Pal system is composed of five core proteins: the inner membrane proteins TolA, TolQ and TolR, the periplasmic protein TolB and the outer membrane protein Pal. They form a network linking the inner and outer membranes and the peptidoglycan layer.

Its subcellular location is the periplasm. In terms of biological role, part of the Tol-Pal system, which plays a role in outer membrane invagination during cell division and is important for maintaining outer membrane integrity. This chain is Tol-Pal system protein TolB, found in Wolbachia pipientis subsp. Culex pipiens (strain wPip).